A 148-amino-acid polypeptide reads, in one-letter code: Large ribosomal subunit protein uL15 (148 aa).

Residues 1–10 (MQLHNLEYKK) show a composition bias toward basic and acidic residues. Residues 1–42 (MQLHNLEYKKGSRNHKEKRVGRGHGSGLGKTSGRGQDGQKAR) are disordered. The span at 11 to 22 (GSRNHKEKRVGR) shows a compositional bias: basic residues. Positions 23–36 (GHGSGLGKTSGRGQ) are enriched in gly residues.

Belongs to the universal ribosomal protein uL15 family. In terms of assembly, part of the 50S ribosomal subunit.

Binds to the 23S rRNA. This is Large ribosomal subunit protein uL15 from Ureaplasma parvum serovar 3 (strain ATCC 27815 / 27 / NCTC 11736).